A 903-amino-acid polypeptide reads, in one-letter code: Probable dipeptidyl-aminopeptidase B (903 aa).

The disordered stretch occupies residues 1-83 (MGKFEDDGNS…PLISSGTKTG (83 aa)). The Cytoplasmic portion of the chain corresponds to 1 to 90 (MGKFEDDGNS…KTGSSSRLRK (90 aa)). The span at 10-37 (SESVPLTRQRSESLASQTSTDSGLSIAS) shows a compositional bias: polar residues. A helical; Signal-anchor for type II membrane protein transmembrane segment spans residues 91–111 (IVWLLVLLCVGGWVLSFVLFL). The Vacuolar segment spans residues 112–903 (TQKRPDTAAL…TANPKPQEST (792 aa)). The tract at residues 121–143 (LSSASTVEIHEPGPATGGTSHGK) is disordered. 3 N-linked (GlcNAc...) asparagine glycosylation sites follow: Asn268, Asn349, and Asn640. The active-site Charge relay system is the Ser754. N-linked (GlcNAc...) asparagine glycosylation is present at Asn808. Residues Asp831 and His864 each act as charge relay system in the active site.

It belongs to the peptidase S9B family.

The protein resides in the vacuole membrane. It carries out the reaction Release of an N-terminal dipeptide, Xaa-Yaa-|-Zaa-, from a polypeptide, preferentially when Yaa is Pro, provided Zaa is neither Pro nor hydroxyproline.. Type IV dipeptidyl-peptidase which removes N-terminal dipeptides sequentially from polypeptides having unsubstituted N-termini provided that the penultimate residue is proline. The polypeptide is Probable dipeptidyl-aminopeptidase B (dapB) (Penicillium rubens (strain ATCC 28089 / DSM 1075 / NRRL 1951 / Wisconsin 54-1255) (Penicillium chrysogenum)).